A 592-amino-acid polypeptide reads, in one-letter code: MDNGRIVRINGPLVVADNMRNAQMYEVVEVGEPRLIGEITRIEGDRAFIQVYEDTSGIKPNEPVYRTGAPLSIELGPGLIGKIFDGLQRPLDSIKELTKSPFIARGIKVPSIDRKTKWHFVPKVKKGDKVEGGSIIGIVNETPLVEHRILVPPYVHGTLKEVVAEGDYTVEDPIAIVDMNGDEVPVKLMQKWPVRIPRPFKEKLEPTEPLLTGTRVLDTIFPIAKGGTAAIPGPFGSGKTVTLQSLAKWSAAKIVIYVGCGERGNEMTDELRQFPSLKDPWTGRPLLERTILVANTSNMPVAAREASIYVGITMAEYFRDQGYDTLLVADSTSRWAEALRDLGGRMEEMPAEEGFPSYLPSRLAEYYERAGRVKTIGNPERFGSVTVASAVSPPGGDFTEPVTSQTLRFVKVFWPLDVSLAQARHYPAINWLQGFSAYVDLVANWWNTNVDPKWREMRDMMVRTLIREDELRQIVRLVGPESLAEKDKLILETARLIKEAFLKQNAYDDIDAFSSPQKQARIMRLIYLFNTYASKLVERGIPTKKIVDSMGQLLPEIIRSKAAIKNDELNRYDELERKLITVFENLEKEAGT.

233 to 240 (GPFGSGKT) contacts ATP.

It belongs to the ATPase alpha/beta chains family. As to quaternary structure, has multiple subunits with at least A(3), B(3), C, D, E, F, H, I and proteolipid K(x).

The protein localises to the cell membrane. The catalysed reaction is ATP + H2O + 4 H(+)(in) = ADP + phosphate + 5 H(+)(out). In terms of biological role, component of the A-type ATP synthase that produces ATP from ADP in the presence of a proton gradient across the membrane. The A chain is the catalytic subunit. This Saccharolobus solfataricus (strain ATCC 35092 / DSM 1617 / JCM 11322 / P2) (Sulfolobus solfataricus) protein is A-type ATP synthase subunit A.